Consider the following 1165-residue polypeptide: uncharacterized protein (1165 aa).

Residues 422-442 are disordered; it reads EAAPPRPPRKSKAPEPTGDKA.

This is an uncharacterized protein from Frog virus 3 (isolate Goorha) (FV-3).